A 1393-amino-acid chain; its full sequence is Protein strawberry notch homolog 1 (1393 aa).

The interval 129–148 is disordered; sequence STRPSVSAPTVRNAMTSAPS. Phosphoserine is present on serine 148. Lysine 149 carries the post-translational modification N6-acetyllysine. Phosphoserine is present on residues serine 162 and serine 214. The residue at position 413 (lysine 413) is an N6-acetyllysine. Positions 687–840 are disordered; sequence APSNNSSPRD…ANSNTNSNSS (154 aa). Serine 692, serine 693, and serine 697 each carry phosphoserine. The span at 697–716 shows a compositional bias: basic and acidic residues; it reads SPCKENKIKKRKGEEITREA. Over residues 733-747 the composition is skewed to acidic residues; the sequence is SGSESDASDNEESDY. A phosphoserine mark is found at serine 754, serine 755, and serine 768. Over residues 756-775 the composition is skewed to acidic residues; that stretch reads GDDDDFNPFLDESNEDDEND. The segment covering 781–793 has biased composition (basic residues); that stretch reads KDHKKNKEKKKKK. 2 positions are modified to phosphoserine: serine 794 and serine 815. Residues 824–840 are compositionally biased toward low complexity; it reads PAPNSTPANSNTNSNSS. Positions 843 to 870 form a coiled coil; sequence TSQDAVERAQQMKKDLLDKLEKLAEDLP. At lysine 1222 the chain carries N6-acetyllysine. Serine 1386 is subject to Phosphoserine.

This sequence belongs to the SBNO family.

It is found in the nucleus. Functionally, plays a crucial role in the regulation of neural stem cells (NSCs) proliferation. Enhances the phosphorylation of GSK3B through the PI3K-Akt signaling pathway, thereby upregulating the Wnt/beta-catenin signaling pathway and promoting the proliferation of NSCs. Improves ischemic stroke recovery while inhibiting neuroinflammation through small extracellular vesicles (sEVs)-mediated mechanism. Enhances the secretion of sEVs from NSCs, which in turn inhibit both the MAPK and NF-kappaB pathways in microglia. This inhibition suppresses the pro-inflammatory M1 polarization of microglia, promoting a shift towards the M2 anti-inflammatory phenotype, which is beneficial for reducing neuroinflammation. This is Protein strawberry notch homolog 1 (SBNO1) from Homo sapiens (Human).